Consider the following 1257-residue polypeptide: Elongation factor 2 (1257 aa).

In terms of domain architecture, DOD-type homing endonuclease spans 273–402 (LAGLMFGDGC…LQLLLQKFDV (130 aa)). The tr-type G domain occupies 541–782 (VEEHHNFAAE…MVVKHLPDPV (242 aa)). Residues 616-620 (DTPGH) and 670-673 (NKVD) contribute to the GTP site. Histidine 1120 is modified (diphthamide). Positions 1237–1250 (ERKGLKPEPPKPED) are enriched in basic and acidic residues. Residues 1237–1257 (ERKGLKPEPPKPEDYIEDYGG) are disordered.

Belongs to the TRAFAC class translation factor GTPase superfamily. Classic translation factor GTPase family. EF-G/EF-2 subfamily. This protein undergoes a protein self splicing that involves a post-translational excision of the intervening region (intein) followed by peptide ligation.

The protein resides in the cytoplasm. In terms of biological role, catalyzes the GTP-dependent ribosomal translocation step during translation elongation. During this step, the ribosome changes from the pre-translocational (PRE) to the post-translocational (POST) state as the newly formed A-site-bound peptidyl-tRNA and P-site-bound deacylated tRNA move to the P and E sites, respectively. Catalyzes the coordinated movement of the two tRNA molecules, the mRNA and conformational changes in the ribosome. The polypeptide is Elongation factor 2 (Methanopyrus kandleri (strain AV19 / DSM 6324 / JCM 9639 / NBRC 100938)).